The sequence spans 372 residues: MAHAVRALWPHGRALAWRLGDRPALGLHAQSRAGFTGAAGGSGPAATARKGGPRLLGAAALALGGALGLYHTARWHLRAQDLRAERSATQLSLSSRLQLTLYQYKTCPFCSKVRAFLDFHALPYQVVEVNPVRRAEIKFSSYRKVPIVMAQEGESLQQLNDSSVIISALKTYLVSGQPLADIITYYPPMKAVNDQGKEVTEFCNKYWLMLDEKEAQRMYGGKEARTEEMKWRQWADDWLVHLISPNVYRTPAEALASFDYIVKEGNFGTVEGAMAKYMGAAAMYFISKRLKRRHHLRDDVREDLYEAANKWVAAVGKDRPFMGGQKPNLADLAVYGVLRVMEGLEAFDDLMRHTHIQPWYLRVEKAIAEAPQ.

At 1–54 (MAHAVRALWPHGRALAWRLGDRPALGLHAQSRAGFTGAAGGSGPAATARKGGPR) the chain is on the lumenal side. Residues 55–71 (LLGAAALALGGALGLYH) form a helical membrane-spanning segment. The Cytoplasmic segment spans residues 72-372 (TARWHLRAQD…VEKAIAEAPQ (301 aa)). Residues 87 to 190 (SATQLSLSSR…DIITYYPPMK (104 aa)) form the Glutaredoxin domain. Phosphoserine is present on Ser-92. Residues Val-145 and 161–162 (DS) each bind glutathione. Positions 259–372 (DYIVKEGNFG…VEKAIAEAPQ (114 aa)) constitute a GST C-terminal domain.

Belongs to the GST superfamily. As to quaternary structure, may interact with CEBPB. Interacts with EXOSC10. Homodimer. In terms of processing, synthesized as a Golgi membrane-associated protein, and the proteolytic removal of the N-terminal hydrophobic domain leads to the formation of a mature cytosolic enzyme. In terms of tissue distribution, detected in heart (at protein level). Widely expressed. Expressed in heart &gt; kidney &gt; muscle &gt; testis &gt; endometrium = ovary &gt; myometrium = spleen = lung. In endometrium, it is mainly expressed in luminal epithelial cells followed by glandular epithelial cells, but expression is also present in stromal cells at a lower level.

The protein localises to the microsome membrane. Its subcellular location is the cytoplasm. It catalyses the reaction prostaglandin H2 = prostaglandin E2. It carries out the reaction prostaglandin H2 = (12S)-hydroxy-(5Z,8E,10E)-heptadecatrienoate + malonaldehyde. It participates in lipid metabolism; prostaglandin biosynthesis. Isomerase activity is increased by sulfhydril compounds. Dithiothreitol (DTT) is most effective, followed by glutathione (GSH) and 2-mercaptoethanol. Its function is as follows. Isomerase that catalyzes the conversion of PGH2 into the more stable prostaglandin E2 (PGE2) (in vitro). The biological function and the GSH-dependent property of PTGES2 is still under debate. In vivo, PTGES2 could form a complex with GSH and heme and would not participate in PGE2 synthesis but would catalyze the degradation of prostaglandin E2 H2 (PGH2) to 12(S)-hydroxy-5(Z),8(E),10(E)-heptadecatrienoic acid (HHT) and malondialdehyde (MDA). The protein is Prostaglandin E synthase 2 (PTGES2) of Bos taurus (Bovine).